Here is a 192-residue protein sequence, read N- to C-terminus: Urease accessory protein UreE (192 aa).

The interval 170–192 (EHHGHSHSHSHDHVHDEKCGHKH) is disordered. Over residues 178–192 (HSHDHVHDEKCGHKH) the composition is skewed to basic and acidic residues.

Belongs to the UreE family.

The protein localises to the cytoplasm. Involved in urease metallocenter assembly. Binds nickel. Probably functions as a nickel donor during metallocenter assembly. This Cupriavidus necator (strain ATCC 17699 / DSM 428 / KCTC 22496 / NCIMB 10442 / H16 / Stanier 337) (Ralstonia eutropha) protein is Urease accessory protein UreE.